A 230-amino-acid chain; its full sequence is Large ribosomal subunit protein uL1 (230 aa).

It belongs to the universal ribosomal protein uL1 family. In terms of assembly, part of the 50S ribosomal subunit.

Functionally, binds directly to 23S rRNA. The L1 stalk is quite mobile in the ribosome, and is involved in E site tRNA release. In terms of biological role, protein L1 is also a translational repressor protein, it controls the translation of the L11 operon by binding to its mRNA. The chain is Large ribosomal subunit protein uL1 from Lactobacillus johnsonii (strain CNCM I-12250 / La1 / NCC 533).